The primary structure comprises 324 residues: E3 ubiquitin-protein ligase SIAH2 (324 aa).

Residues 1 to 15 show a composition bias toward polar residues; the sequence is MSRPSSTGPSANKPC. A disordered region spans residues 1-42; the sequence is MSRPSSTGPSANKPCSKQPPPQPQHTPSPAAPPAAATISAAG. Phosphoserine is present on Ser-6. Ser-16 is modified (phosphoserine; by DYRK2). A compositionally biased stretch (pro residues) spans 17-32; sequence KQPPPQPQHTPSPAAP. Thr-26 bears the Phosphothreonine; by DYRK2 mark. The residue at position 28 (Ser-28) is a Phosphoserine; by DYRK2 and MAPK14. The segment covering 33 to 42 has biased composition (low complexity); sequence PAAATISAAG. Ser-68 is modified (phosphoserine; by DYRK2). The segment at 80–115 adopts an RING-type zinc-finger fold; the sequence is CPVCFDYVLPPILQCQAGHLVCNQCRQKLSCCPTCR. At Thr-119 the chain carries Phosphothreonine; by DYRK2. The SBD stretch occupies residues 130–322; the sequence is VASAVLFPCK…LGINVTISTC (193 aa). An SIAH-type zinc finger spans residues 133–193; it reads AVLFPCKYAT…VMSHLMHAHK (61 aa). Residues Cys-138, Cys-145, His-157, Cys-161, Cys-168, Cys-175, His-187, and His-192 each coordinate Zn(2+).

Belongs to the SINA (Seven in absentia) family. As to quaternary structure, homodimer. Interacts with UBE2E2. Interacts with PEG3. Interacts with VAV1, without mediating its ubiquitin-mediated degradation. Interacts with CACYBP/SIP. Probable component of some large E3 complex possibly composed of UBE2D1, SIAH2, CACYBP/SIP, SKP1, APC and TBL1X. Interacts with PEG10, which may inhibit its activity. Interacts with EGLN2 and SNCAIP. Interacts with DYRK2. Interacts with NR1D1 and NR1D2. Interacts with DCC. Interacts with AXIN1. Post-translationally, phosphorylated at Ser-28 by MAPK14, which mediates the degradation by the proteasome of EGLN3. Phosphorylated at Ser-28 by DYRK2; this increases the ubiquitin ligase activity and promotes degradation of EGLN3. Widely expressed at low level.

Its subcellular location is the cytoplasm. It is found in the nucleus. It carries out the reaction S-ubiquitinyl-[E2 ubiquitin-conjugating enzyme]-L-cysteine + [acceptor protein]-L-lysine = [E2 ubiquitin-conjugating enzyme]-L-cysteine + N(6)-ubiquitinyl-[acceptor protein]-L-lysine.. It functions in the pathway protein modification; protein ubiquitination. Inhibited by interaction with SNCAIP (isoform 2, but not isoform 1). May be inhibited by interaction with PEG10. Functionally, E3 ubiquitin-protein ligase that mediates ubiquitination and subsequent proteasomal degradation of target proteins. E3 ubiquitin ligases accept ubiquitin from an E2 ubiquitin-conjugating enzyme in the form of a thioester and then directly transfers the ubiquitin to targeted substrates. Mediates E3 ubiquitin ligase activity either through direct binding to substrates or by functioning as the essential RING domain subunit of larger E3 complexes. Triggers the ubiquitin-mediated degradation of many substrates, including proteins involved in transcription regulation (GPS2, POU2AF1, PML, NCOR1), a cell surface receptor (DCC), an antiapoptotic protein (BAG1), and a protein involved in synaptic vesicle function in neurons (SYP). Mediates ubiquitination and proteasomal degradation of DYRK2 in response to hypoxia. It is thereby involved in apoptosis, tumor suppression, cell cycle, transcription and signaling processes. Has some overlapping function with SIAH1. Triggers the ubiquitin-mediated degradation of TRAF2, whereas SIAH1 does not. Promotes monoubiquitination of SNCA. Regulates cellular clock function via ubiquitination of the circadian transcriptional repressors NR1D1 and NR1D2 leading to their proteasomal degradation. Plays an important role in mediating the rhythmic degradation/clearance of NR1D1 and NR1D2 contributing to their circadian profile of protein abundance. Mediates ubiquitination and degradation of EGLN2 and EGLN3 in response to the unfolded protein response (UPR), leading to their degradation and subsequent stabilization of ATF4. Also part of the Wnt signaling pathway in which it mediates the Wnt-induced ubiquitin-mediated proteasomal degradation of AXIN1. The protein is E3 ubiquitin-protein ligase SIAH2 (SIAH2) of Homo sapiens (Human).